The chain runs to 304 residues: Transmembrane protein 178A (304 aa).

The signal sequence occupies residues 1–25 (MESRGLVTAVSLTLSICSLLLLVTA). At 26 to 186 (IFTDHWYETD…LLHLRRITAG (161 aa)) the chain is on the extracellular side. Residue asparagine 165 is glycosylated (N-linked (GlcNAc...) asparagine). A helical membrane pass occupies residues 187–207 (FLGMAAAVLLCGCIVAAISFF). The Cytoplasmic segment spans residues 208–215 (WEESLTQH). A helical membrane pass occupies residues 216–236 (VAGLLFLMTGIFCTISLCTYA). The Extracellular segment spans residues 237 to 267 (ASVAYELNRQPKFIYGLPSDVEHGYSWSLFC). A helical membrane pass occupies residues 268–288 (AWCSLGLIVAAGCLCTAYPFI). The Cytoplasmic portion of the chain corresponds to 289–304 (SRTKILHLKFARDSCV).

The protein belongs to the TMEM178 family.

Its subcellular location is the endoplasmic reticulum membrane. In terms of biological role, may act as a negative regulator of osteoclast differentiation. This Xenopus laevis (African clawed frog) protein is Transmembrane protein 178A (tmem178a).